The primary structure comprises 141 residues: Endoribonuclease YbeY (141 aa).

His-100, His-104, and His-110 together coordinate Zn(2+).

Belongs to the endoribonuclease YbeY family. The cofactor is Zn(2+).

It is found in the cytoplasm. In terms of biological role, single strand-specific metallo-endoribonuclease involved in late-stage 70S ribosome quality control and in maturation of the 3' terminus of the 16S rRNA. The chain is Endoribonuclease YbeY from Helicobacter pylori (strain J99 / ATCC 700824) (Campylobacter pylori J99).